A 369-amino-acid polypeptide reads, in one-letter code: MSDFLALAQPGVQKLSPYVPGKPVDELARELGIDPAAIVKLASNENPLGASPKALEAIRAELAELTRYPDGNGFELKRKLAERCAVDAAQVTLGNGSNDILDLVARAYLAPGLNAVFSEHAFAVYPIATQAVGAEGRAVKARAWGHDLEAMLAAIDGQTRVVFVANPNNPTGTWFGADALERFLAQVPAEVLVVLDEAYIEYAEGDELPDGLDYLARHPNLLVSRTFSKAYGLASLRVGYALSSKAVADVLNRVRQPFNVNSLALAAACAALDDHDYLAQSRRLNDSGMAQLEDGFHALGLSWIPSKGNFIAVDLARDAGPVYQALLREGVIVRPVAGYGMPTFLRVSIGLPEENDRFLQALGKVLAHD.

Lysine 229 carries the N6-(pyridoxal phosphate)lysine modification.

The protein belongs to the class-II pyridoxal-phosphate-dependent aminotransferase family. Histidinol-phosphate aminotransferase subfamily. Homodimer. Pyridoxal 5'-phosphate is required as a cofactor.

The catalysed reaction is L-histidinol phosphate + 2-oxoglutarate = 3-(imidazol-4-yl)-2-oxopropyl phosphate + L-glutamate. Its pathway is amino-acid biosynthesis; L-histidine biosynthesis; L-histidine from 5-phospho-alpha-D-ribose 1-diphosphate: step 7/9. This chain is Histidinol-phosphate aminotransferase 2 (hisC2), found in Pseudomonas aeruginosa (strain ATCC 15692 / DSM 22644 / CIP 104116 / JCM 14847 / LMG 12228 / 1C / PRS 101 / PAO1).